The following is a 61-amino-acid chain: Small ribosomal subunit protein uS14 (61 aa).

Positions 24, 27, 40, and 43 each coordinate Zn(2+).

This sequence belongs to the universal ribosomal protein uS14 family. Zinc-binding uS14 subfamily. As to quaternary structure, part of the 30S ribosomal subunit. Contacts proteins S3 and S10. The cofactor is Zn(2+).

Binds 16S rRNA, required for the assembly of 30S particles and may also be responsible for determining the conformation of the 16S rRNA at the A site. This chain is Small ribosomal subunit protein uS14, found in Mycoplasma pneumoniae (strain ATCC 29342 / M129 / Subtype 1) (Mycoplasmoides pneumoniae).